Consider the following 127-residue polypeptide: S-adenosylmethionine decarboxylase proenzyme (127 aa).

Catalysis depends on serine 63, which acts as the Schiff-base intermediate with substrate; via pyruvic acid. The residue at position 63 (serine 63) is a Pyruvic acid (Ser); by autocatalysis. The Proton acceptor; for processing activity role is filled by histidine 68. Residue cysteine 83 is the Proton donor; for catalytic activity of the active site.

The protein belongs to the prokaryotic AdoMetDC family. Type 1 subfamily. As to quaternary structure, heterotetramer of two alpha and two beta chains arranged as a dimer of alpha/beta heterodimers. It depends on pyruvate as a cofactor. In terms of processing, is synthesized initially as an inactive proenzyme. Formation of the active enzyme involves a self-maturation process in which the active site pyruvoyl group is generated from an internal serine residue via an autocatalytic post-translational modification. Two non-identical subunits are generated from the proenzyme in this reaction, and the pyruvate is formed at the N-terminus of the alpha chain, which is derived from the carboxyl end of the proenzyme. The post-translation cleavage follows an unusual pathway, termed non-hydrolytic serinolysis, in which the side chain hydroxyl group of the serine supplies its oxygen atom to form the C-terminus of the beta chain, while the remainder of the serine residue undergoes an oxidative deamination to produce ammonia and the pyruvoyl group blocking the N-terminus of the alpha chain.

The enzyme catalyses S-adenosyl-L-methionine + H(+) = S-adenosyl 3-(methylsulfanyl)propylamine + CO2. Its pathway is amine and polyamine biosynthesis; S-adenosylmethioninamine biosynthesis; S-adenosylmethioninamine from S-adenosyl-L-methionine: step 1/1. Its function is as follows. Catalyzes the decarboxylation of S-adenosylmethionine to S-adenosylmethioninamine (dcAdoMet), the propylamine donor required for the synthesis of the polyamines spermine and spermidine from the diamine putrescine. This is S-adenosylmethionine decarboxylase proenzyme from Carboxydothermus hydrogenoformans (strain ATCC BAA-161 / DSM 6008 / Z-2901).